The primary structure comprises 415 residues: Serine hydroxymethyltransferase 1 (415 aa).

Residues Leu117 and 121-123 each bind (6S)-5,6,7,8-tetrahydrofolate; that span reads GHL. N6-(pyridoxal phosphate)lysine is present on Lys225. Residue 349–351 coordinates (6S)-5,6,7,8-tetrahydrofolate; it reads SPF.

It belongs to the SHMT family. Homodimer. Pyridoxal 5'-phosphate is required as a cofactor.

Its subcellular location is the cytoplasm. It catalyses the reaction (6R)-5,10-methylene-5,6,7,8-tetrahydrofolate + glycine + H2O = (6S)-5,6,7,8-tetrahydrofolate + L-serine. It functions in the pathway one-carbon metabolism; tetrahydrofolate interconversion. Its pathway is amino-acid biosynthesis; glycine biosynthesis; glycine from L-serine: step 1/1. Functionally, catalyzes the reversible interconversion of serine and glycine with tetrahydrofolate (THF) serving as the one-carbon carrier. This reaction serves as the major source of one-carbon groups required for the biosynthesis of purines, thymidylate, methionine, and other important biomolecules. Also exhibits THF-independent aldolase activity toward beta-hydroxyamino acids, producing glycine and aldehydes, via a retro-aldol mechanism. This chain is Serine hydroxymethyltransferase 1, found in Sulfurimonas denitrificans (strain ATCC 33889 / DSM 1251) (Thiomicrospira denitrificans (strain ATCC 33889 / DSM 1251)).